A 485-amino-acid polypeptide reads, in one-letter code: Maturase K (485 aa).

It belongs to the intron maturase 2 family. MatK subfamily.

It localises to the plastid. The protein localises to the chloroplast. Usually encoded in the trnK tRNA gene intron. Probably assists in splicing its own and other chloroplast group II introns. This Malus domestica (Apple) protein is Maturase K.